Consider the following 224-residue polypeptide: Urease accessory protein UreF (224 aa).

The protein belongs to the UreF family. UreD, UreF and UreG form a complex that acts as a GTP-hydrolysis-dependent molecular chaperone, activating the urease apoprotein by helping to assemble the nickel containing metallocenter of UreC. The UreE protein probably delivers the nickel.

The protein localises to the cytoplasm. In terms of biological role, required for maturation of urease via the functional incorporation of the urease nickel metallocenter. This Methylorubrum populi (strain ATCC BAA-705 / NCIMB 13946 / BJ001) (Methylobacterium populi) protein is Urease accessory protein UreF.